Here is a 310-residue protein sequence, read N- to C-terminus: Ribonuclease HIII (310 aa).

An RNase H type-2 domain is found at 91–307; it reads YNCIGSDEAG…REKAQNLVTK (217 aa). A divalent metal cation contacts are provided by Asp-97, Glu-98, and Asp-202.

Belongs to the RNase HII family. RnhC subfamily. Mn(2+) is required as a cofactor. The cofactor is Mg(2+).

The protein localises to the cytoplasm. The enzyme catalyses Endonucleolytic cleavage to 5'-phosphomonoester.. In terms of biological role, endonuclease that specifically degrades the RNA of RNA-DNA hybrids. This Staphylococcus haemolyticus (strain JCSC1435) protein is Ribonuclease HIII.